The sequence spans 545 residues: Cannabidiolic acid synthase-like 1 (545 aa).

An N-terminal signal peptide occupies residues 1–28 (MKCSTFCFWYVCKIIFFFLSFNIQISIA). A disulfide bridge links Cys-37 with Cys-99. Asn-45, Asn-65, Asn-89, and Asn-168 each carry an N-linked (GlcNAc...) asparagine glycan. The FAD-binding PCMH-type domain occupies 77 to 251 (TTPKPLVIIT…AAWKIRLVAV (175 aa)). The segment at residues 114-176 (HDAEGMSYIS…ENLSFPAGYC (63 aa)) is a cross-link (6-(S-cysteinyl)-8alpha-(pros-histidyl)-FAD (His-Cys)). Residue His-292 participates in substrate binding. N-linked (GlcNAc...) asparagine glycosylation is found at Asn-297, Asn-305, Asn-329, and Asn-361. Tyr-417 contributes to the substrate binding site. An N-linked (GlcNAc...) asparagine glycan is attached at Asn-467. The active-site Proton acceptor is the Tyr-484. N-linked (GlcNAc...) asparagine glycosylation is present at Asn-499.

The protein belongs to the oxygen-dependent FAD-linked oxidoreductase family. Requires FAD as cofactor. The FAD cofactor is bound via a bicovalent 6-S-cysteinyl, 8alpha-N1-histidyl FAD linkage.

The protein resides in the secreted. Has no cannabidiolic acid synthase activity. The sequence is that of Cannabidiolic acid synthase-like 1 (CBDAS2) from Cannabis sativa (Hemp).